Consider the following 456-residue polypeptide: N(6)-adenosine-methyltransferase non-catalytic subunit METTL14 (456 aa).

A disordered region spans residues 50–75 (TCRASYDTSAPNAKRKYLDEGETDED). Interaction with METTL3 regions lie at residues 135-136 (RD) and 237-238 (SG). The segment at 245 to 254 (RVCLRKWGYR) is positively charged region required for RNA-binding. Interaction with METTL3 regions lie at residues 255 to 258 (RCED) and 278 to 287 (KAVFQRTKEH). Positions 297–298 (KR) are positively charged region required for RNA-binding. The interval 308–312 (NVDID) is interaction with METTL3. Residues 393–456 (ERLRPKSPPP…GAHRGGFPPR (64 aa)) are disordered. The residue at position 399 (S399) is a Phosphoserine. Over residues 409–423 (GGGAPRGGGRGGTSA) the composition is skewed to gly residues. Over residues 425-440 (RGRERNRSNFRGERGG) the composition is skewed to basic and acidic residues. Gly residues predominate over residues 441-450 (FRGGRGGAHR).

This sequence belongs to the MT-A70-like family. Heterodimer; heterodimerizes with METTL3 to form an antiparallel heterodimer that constitutes an active methyltransferase. Component of the WMM complex, a N6-methyltransferase complex composed of a catalytic subcomplex, named MAC, and of an associated subcomplex, named MACOM. The MAC subcomplex is composed of METTL3 and METTL14. The MACOM subcomplex is composed of WTAP, ZC3H13, CBLL1/HAKAI, VIRMA, and, in some cases of RBM15 (RBM15 or RBM15B).

It localises to the nucleus. Functionally, the METTL3-METTL14 heterodimer forms a N6-methyltransferase complex that methylates adenosine residues at the N(6) position of some mRNAs and regulates the circadian clock, differentiation of embryonic stem cells and cortical neurogenesis. In the heterodimer formed with METTL3, METTL14 constitutes the RNA-binding scaffold that recognizes the substrate rather than the catalytic core. N6-methyladenosine (m6A), which takes place at the 5'-[AG]GAC-3' consensus sites of some mRNAs, plays a role in mRNA stability and processing. M6A acts as a key regulator of mRNA stability by promoting mRNA destabilization and degradation. In embryonic stem cells (ESCs), m6A methylation of mRNAs encoding key naive pluripotency-promoting transcripts results in transcript destabilization. M6A regulates spermatogonial differentiation and meiosis and is essential for male fertility and spermatogenesis. M6A also regulates cortical neurogenesis: m6A methylation of transcripts related to transcription factors, neural stem cells, the cell cycle and neuronal differentiation during brain development promotes their destabilization and decay, promoting differentiation of radial glial cells. In Homo sapiens (Human), this protein is N(6)-adenosine-methyltransferase non-catalytic subunit METTL14.